Consider the following 266-residue polypeptide: Auxin-responsive protein IAA21 (266 aa).

The EAR-like (transcriptional repression) signature appears at 24–28; it reads LRLGL. A disordered region spans residues 27–50; the sequence is GLPGTAEEAESEGGGGGGTDAAPL. In terms of domain architecture, PB1 spans 146–248; sequence CLYVKVSMDG…SCRRLRIMKG (103 aa).

This sequence belongs to the Aux/IAA family. Homodimers and heterodimers. Highly expressed in flowers. Expressed in roots and seedlings.

It is found in the nucleus. Aux/IAA proteins are short-lived transcriptional factors that function as repressors of early auxin response genes at low auxin concentrations. The sequence is that of Auxin-responsive protein IAA21 (IAA21) from Oryza sativa subsp. japonica (Rice).